The following is a 250-amino-acid chain: Flap endonuclease Xni (250 aa).

Position 104 (aspartate 104) interacts with Mg(2+). The 90-residue stretch at 160-249 (VQPQQLTDFW…LQGNLQQLRL (90 aa)) folds into the 5'-3' exonuclease domain. K(+)-binding residues include leucine 171, alanine 172, proline 180, valine 182, and isoleucine 185. An interaction with DNA region spans residues 184–189 (GIGPKS).

This sequence belongs to the Xni family. Requires Mg(2+) as cofactor. It depends on K(+) as a cofactor.

Its function is as follows. Has flap endonuclease activity. During DNA replication, flap endonucleases cleave the 5'-overhanging flap structure that is generated by displacement synthesis when DNA polymerase encounters the 5'-end of a downstream Okazaki fragment. This Sodalis glossinidius (strain morsitans) protein is Flap endonuclease Xni.